The following is a 217-amino-acid chain: AFG2-interacting ribosome maturation factor (217 aa).

Part of the 55LCC heterohexameric ATPase complex composed at least of AIRIM, AFG2A, AFG2B and CINP. Does not associate with pre-60S ribosomal particles. Phosphorylated on serines by CK2 kinase.

Its subcellular location is the nucleus. The protein localises to the cytoplasm. Part of the 55LCC heterohexameric ATPase complex which is chromatin-associated and promotes replisome proteostasis to maintain replication fork progression and genome stability. Required for replication fork progression, sister chromatid cohesion, and chromosome stability. The ATPase activity is specifically enhanced by replication fork DNA and is coupled to cysteine protease-dependent cleavage of replisome substrates in response to replication fork damage. Uses ATPase activity to process replisome substrates in S-phase, facilitating their proteolytic turnover from chromatin to ensure DNA replication and mitotic fidelity. Involved in the cytoplasmic maturation steps of pre-60S ribosomal particles by promoting the release of shuttling protein RSL24D1/RLP24 from the pre-ribosomal particles. This is AFG2-interacting ribosome maturation factor (Airim) from Mus musculus (Mouse).